The sequence spans 193 residues: dCTP deaminase (193 aa).

DCTP contacts are provided by residues 110-115 (RSSLAR), Asp128, 136-138 (VLE), Tyr171, Lys178, and Gln182. The active-site Proton donor/acceptor is Glu138. The disordered stretch occupies residues 169-193 (RPYNSRQDAKYRDQQGAVASRIDKD).

The protein belongs to the dCTP deaminase family. As to quaternary structure, homotrimer.

The enzyme catalyses dCTP + H2O + H(+) = dUTP + NH4(+). The protein operates within pyrimidine metabolism; dUMP biosynthesis; dUMP from dCTP (dUTP route): step 1/2. Functionally, catalyzes the deamination of dCTP to dUTP. The polypeptide is dCTP deaminase (Serratia proteamaculans (strain 568)).